Reading from the N-terminus, the 198-residue chain is Recombination protein RecR (198 aa).

A C4-type zinc finger spans residues 57-72 (CQRCNTFSEAELCAIC). The Toprim domain maps to 80–175 (DQLCIVEMPA…TVTRIARGMP (96 aa)).

It belongs to the RecR family.

In terms of biological role, may play a role in DNA repair. It seems to be involved in an RecBC-independent recombinational process of DNA repair. It may act with RecF and RecO. In Chromobacterium violaceum (strain ATCC 12472 / DSM 30191 / JCM 1249 / CCUG 213 / NBRC 12614 / NCIMB 9131 / NCTC 9757 / MK), this protein is Recombination protein RecR.